We begin with the raw amino-acid sequence, 284 residues long: Pantothenate synthetase (284 aa).

ATP is bound at residue 30 to 37 (MGNLHDGH). The active-site Proton donor is His37. Gln61 contributes to the (R)-pantoate binding site. Residue Gln61 participates in beta-alanine binding. An ATP-binding site is contributed by 149–152 (GEKD). Gln155 contributes to the (R)-pantoate binding site. ATP-binding positions include Val178 and 186–189 (LSSR).

The protein belongs to the pantothenate synthetase family. In terms of assembly, homodimer.

It localises to the cytoplasm. It catalyses the reaction (R)-pantoate + beta-alanine + ATP = (R)-pantothenate + AMP + diphosphate + H(+). It participates in cofactor biosynthesis; (R)-pantothenate biosynthesis; (R)-pantothenate from (R)-pantoate and beta-alanine: step 1/1. Catalyzes the condensation of pantoate with beta-alanine in an ATP-dependent reaction via a pantoyl-adenylate intermediate. The polypeptide is Pantothenate synthetase (Cronobacter sakazakii (strain ATCC BAA-894) (Enterobacter sakazakii)).